Here is a 366-residue protein sequence, read N- to C-terminus: MSTAYFDADCDLEPSLKSLFSLKTLKWIFVGGKGGVGKTTTSCSIASRLAEERESVLILSTDPAHNLSDAFVQKFSNAPTLVNGYKNLYAMELDASYQQAVEFKLKEENSLFSKFLPDLISALPGIDEALGFATLMQSVKSMSYSVIVFDTAPTGHTLRLLSFPSLLEKGLSKLFSIKQNMSGALQLINSVSGNAIEEETLNSKLEDLKAITTSVKETFQDPSKTTFVCVCIPEFLSVYETERLIQELAKQSISCSHIVVNQVMFPIDLPSGNDQGESVLKDSSELLKLEDIPSDHSKLVEFTEKIVCSYNKLLSYSKLLYSKYYSKRNMQMKYLEQIRDLYSYDFHVAYIPTLNNEVSKIRVLIS.

An ATP-binding site is contributed by 33 to 40; sequence KGGVGKTT. Asp62 is a catalytic residue. Glu234 and Asn261 together coordinate ATP.

It belongs to the arsA ATPase family. In terms of assembly, homodimer.

It localises to the cytoplasm. It is found in the endoplasmic reticulum. Functionally, ATPase required for the post-translational delivery of tail-anchored (TA) proteins to the endoplasmic reticulum. Recognizes and selectively binds the transmembrane domain of TA proteins in the cytosol. This complex then targets to the endoplasmic reticulum by membrane-bound receptors, where the tail-anchored protein is released for insertion. This process is regulated by ATP binding and hydrolysis. ATP binding drives the homodimer towards the closed dimer state, facilitating recognition of newly synthesized TA membrane proteins. ATP hydrolysis is required for insertion. Subsequently, the homodimer reverts towards the open dimer state, lowering its affinity for the membrane-bound receptor, and returning it to the cytosol to initiate a new round of targeting. This is ATPase ASNA1 homolog from Cryptosporidium parvum (strain Iowa II).